The following is a 348-amino-acid chain: SUMO-activating enzyme subunit 1 (348 aa).

Belongs to the ubiquitin-activating E1 family. In terms of assembly, heterodimer of sae1 and uba2/sae2. The heterodimer corresponds to the two domains that are encoded on a single polypeptide chain in ubiquitin-activating enzyme E1. Interacts with ube2i.

It localises to the nucleus. Its pathway is protein modification; protein sumoylation. Its function is as follows. The heterodimer acts as an E1 ligase for sumo1, sumo2, and sumo3. It mediates ATP-dependent activation of sumo proteins followed by formation of a thioester bond between a sumo protein and a conserved active site cysteine residue on uba2/sae2. This is SUMO-activating enzyme subunit 1 (sae1) from Danio rerio (Zebrafish).